The following is a 956-amino-acid chain: Calsyntenin-3 (956 aa).

The first 19 residues, 1–19 (MTLLLLPLLLASLLASCSC), serve as a signal peptide directing secretion. The Extracellular segment spans residues 20-847 (NKANKHKPWI…SHRNSMIPSA (828 aa)). Cadherin domains are found at residues 29-145 (IEAE…APVF) and 146-246 (VERL…KPSW). Residues Asn299, Asn327, Asn347, Asn507, and Asn740 are each glycosylated (N-linked (GlcNAc...) asparagine). Residues 848–868 (ATLIIVVCVGFLVLMVVLGLV) form a helical membrane-spanning segment. Residues 869–956 (RIHSLHRRVS…RIIETPPHRY (88 aa)) are Cytoplasmic-facing. A disordered region spans residues 917–956 (ACVTGAVGGQQEDEDSSDSEVADSPSSDERRIIETPPHRY). The span at 927–937 (QEDEDSSDSEV) shows a compositional bias: acidic residues. Basic and acidic residues predominate over residues 943 to 956 (SDERRIIETPPHRY).

This sequence belongs to the calsyntenin family. Interacts (via cadherin domains) with both alpha and beta isoforms of neurexins (NRXN1, NRXN2 and NRXN3). Directly interacts with APBA2. Forms a tripartite complex with APBA2 and APP. Interacts with low affinity with KLC1. Interacts with SLC23A2/SVCT2. In terms of processing, proteolytically processed under normal cellular conditions. A primary zeta-cleavage generates a large extracellular (soluble) N-terminal domain (sAlc) and a short C-terminal transmembrane fragment (CTF1). A secondary cleavage catalyzed by gamma-secretase within the transmembrane domain releases the beta-Alc-beta chain in the extracellular milieu and produces an intracellular fragment (AlcICD). This processing is strongly suppressed in the tripartite complex formed with APBA2 and APP, which seems to prevent the association with gamma-secretase.

Its subcellular location is the postsynaptic cell membrane. It is found in the endoplasmic reticulum membrane. It localises to the golgi apparatus membrane. The protein localises to the cell projection. The protein resides in the dendrite. Functionally, postsynaptic adhesion molecule that binds to presynaptic neurexins to mediate both excitatory and inhibitory synapse formation. Promotes synapse development by acting as a cell adhesion molecule at the postsynaptic membrane, which associates with both neurexin-alpha and neurexin-beta proteins at the presynaptic membrane. Regulates the balance between excitatory and inhibitory synapses by inhibiting formation of excitatory parallel-fiber synapses and promoting formation of inhibitory synapses in the same neuron. May also be involved in ascorbate (vitamin C) uptake via its interaction with SLC23A2/SVCT2. Complex formation with APBA2 and APP, stabilizes APP metabolism and enhances APBA2-mediated suppression of beta-APP40 secretion, due to the retardation of intracellular APP maturation. The chain is Calsyntenin-3 (CLSTN3) from Pongo abelii (Sumatran orangutan).